Reading from the N-terminus, the 220-residue chain is MAQEQPKNNEKSAEKTQTKPVIELLIPLEKYLAAGVHIGTHICTKFMEPFVYRVRNDGLYILDVRKIDERIRIAAKFLSRYEPSKIAAVSVRTYGQKPVVKFCNYVGCKPFTGRFMPGTFTNPSLKWYFEPDIVLLTDPRADSQALKEAAEIGIPIVSLADTDNRTEYIDLIIPANNKGRKSLALIYWLLARQILRERGLLPPDGDLPEPPSEFEVKFKR.

The tract at residues 201 to 220 (LPPDGDLPEPPSEFEVKFKR) is disordered.

The protein belongs to the universal ribosomal protein uS2 family.

This is Small ribosomal subunit protein uS2 from Staphylothermus marinus (strain ATCC 43588 / DSM 3639 / JCM 9404 / F1).